The following is a 144-amino-acid chain: Large ribosomal subunit protein uL15 (144 aa).

The tract at residues 1-52 (MKLHTLKSTPGARVEKHRVGRGHAAGKGKQAGKGQSGQNKRHGHRLGFEGGQ) is disordered. Over residues 15-26 (EKHRVGRGHAAG) the composition is skewed to basic residues.

Belongs to the universal ribosomal protein uL15 family. In terms of assembly, part of the 50S ribosomal subunit.

Functionally, binds to the 23S rRNA. This is Large ribosomal subunit protein uL15 from Mycoplasmopsis agalactiae (strain NCTC 10123 / CIP 59.7 / PG2) (Mycoplasma agalactiae).